Here is a 96-residue protein sequence, read N- to C-terminus: MDHKLYLRIKKTNQHLYAYVLYKGKQLVTVSTNQKIIRNDINKVNKKIYPEILGYLLSDKIKEFGFLNIYLKRTYLFHGKVKTIVDVLRKNGVVIY.

It belongs to the universal ribosomal protein uL18 family.

The protein resides in the mitochondrion. The protein is Large ribosomal subunit protein uL18m (RPL18) of Reclinomonas americana.